The following is a 341-amino-acid chain: Anthranilate phosphoribosyltransferase (341 aa).

5-phospho-alpha-D-ribose 1-diphosphate is bound by residues Gly84, 87 to 88 (GD), Thr92, 94 to 97 (NIST), 112 to 120 (KHGNRSVSS), and Ser124. Gly84 contacts anthranilate. Ser96 lines the Mg(2+) pocket. Asn115 serves as a coordination point for anthranilate. Arg170 serves as a coordination point for anthranilate. Asp229 and Glu230 together coordinate Mg(2+).

Belongs to the anthranilate phosphoribosyltransferase family. In terms of assembly, homodimer. Mg(2+) is required as a cofactor.

The catalysed reaction is N-(5-phospho-beta-D-ribosyl)anthranilate + diphosphate = 5-phospho-alpha-D-ribose 1-diphosphate + anthranilate. It participates in amino-acid biosynthesis; L-tryptophan biosynthesis; L-tryptophan from chorismate: step 2/5. Its function is as follows. Catalyzes the transfer of the phosphoribosyl group of 5-phosphorylribose-1-pyrophosphate (PRPP) to anthranilate to yield N-(5'-phosphoribosyl)-anthranilate (PRA). This Polynucleobacter asymbioticus (strain DSM 18221 / CIP 109841 / QLW-P1DMWA-1) (Polynucleobacter necessarius subsp. asymbioticus) protein is Anthranilate phosphoribosyltransferase.